A 632-amino-acid polypeptide reads, in one-letter code: Nucleoside triphosphatase I (632 aa).

The Helicase ATP-binding domain occupies 42 to 204 (FLGLDKMHSL…VMLVNLLRPK (163 aa)). 55 to 62 (HETGVGKT) is a binding site for ATP. Residues 141–144 (DECH) carry the DEXH box motif. The Helicase C-terminal domain maps to 367–532 (KFTDVCLRIL…EFTQLFKVFK (166 aa)). The binding to the cap-specific mRNA (nucleoside-2'-O-)-methyltransferase stretch occupies residues 457-524 (DIFILDMTWN…DIIRTKSKEF (68 aa)).

It belongs to the helicase family. NPH I subfamily. Monomer. Interacts (via C-terminus) with RAP94 (via N-terminus). Interacts with the cap-specific mRNA (nucleoside-2'-O-)-methyltransferase.

The protein localises to the virion. It carries out the reaction a ribonucleoside 5'-triphosphate + H2O = a ribonucleoside 5'-diphosphate + phosphate + H(+). Its function is as follows. DNA-dependent ATPase required for providing the needed energy to achieve the termination of early transcripts. Acts in concert with the RAP94 subunit of the virion RNA polymerase and the capping enzyme/VTF to catalyze release of UUUUUNU-containing nascent RNA from the elongation complex. NPH-I must bind ssDNA in order to exhibit ATPase activity. The polypeptide is Nucleoside triphosphatase I (NPH1) (Myxoma virus (strain Lausanne) (MYXV)).